Here is an 89-residue protein sequence, read N- to C-terminus: Small ribosomal subunit protein uS14 (89 aa).

The protein belongs to the universal ribosomal protein uS14 family. Part of the 30S ribosomal subunit. Contacts proteins S3 and S10.

Its function is as follows. Binds 16S rRNA, required for the assembly of 30S particles and may also be responsible for determining the conformation of the 16S rRNA at the A site. This is Small ribosomal subunit protein uS14 from Chlorobium luteolum (strain DSM 273 / BCRC 81028 / 2530) (Pelodictyon luteolum).